Reading from the N-terminus, the 323-residue chain is tRNA (guanine(9)-N1)-methyltransferase (323 aa).

Over residues 1–16 the composition is skewed to polar residues; it reads MTEQTSEATVVNNSPA. 2 disordered regions span residues 1-34 and 192-215; these read MTEQ…EIEE and TGAP…NSTD. Over residues 25–34 the composition is skewed to basic and acidic residues; the sequence is EKPTPEEIEE. Residues 99–319 form the SAM-dependent MTase TRM10-type domain; it reads KAQPIPSRQI…KVLPPRKIKS (221 aa). The span at 204 to 215 shows a compositional bias: low complexity; it reads GNSNSNTTNSTD. S-adenosyl-L-methionine-binding positions include 225-226, Gly-245, 249-253, Cys-257, Leu-271, and 283-285; these read LT, DKNRH, and HVL. Asp-249 serves as the catalytic Proton acceptor.

This sequence belongs to the class IV-like SAM-binding methyltransferase superfamily. TRM10 family. In terms of assembly, monomer.

It localises to the cytoplasm. It is found in the nucleus. The catalysed reaction is guanosine(9) in tRNA + S-adenosyl-L-methionine = N(1)-methylguanosine(9) in tRNA + S-adenosyl-L-homocysteine + H(+). In terms of biological role, S-adenosyl-L-methionine-dependent guanine N(1)-methyltransferase that catalyzes the formation of N(1)-methylguanine at position 9 (m1G9) in cytoplasmic tRNA. This is tRNA (guanine(9)-N1)-methyltransferase from Candida albicans (strain SC5314 / ATCC MYA-2876) (Yeast).